We begin with the raw amino-acid sequence, 466 residues long: Asparagine--tRNA ligase (466 aa).

It belongs to the class-II aminoacyl-tRNA synthetase family. As to quaternary structure, homodimer.

The protein localises to the cytoplasm. It catalyses the reaction tRNA(Asn) + L-asparagine + ATP = L-asparaginyl-tRNA(Asn) + AMP + diphosphate + H(+). The polypeptide is Asparagine--tRNA ligase (Xylella fastidiosa (strain 9a5c)).